The chain runs to 365 residues: 3-isopropylmalate dehydrogenase (365 aa).

R96, R106, R134, and D224 together coordinate substrate. Residues D224, D248, and D252 each contribute to the Mg(2+) site. 288 to 300 (GSAPTIAKQNIAN) contacts NAD(+).

This sequence belongs to the isocitrate and isopropylmalate dehydrogenases family. LeuB type 1 subfamily. As to quaternary structure, homodimer. Requires Mg(2+) as cofactor. The cofactor is Mn(2+).

It localises to the cytoplasm. It catalyses the reaction (2R,3S)-3-isopropylmalate + NAD(+) = 4-methyl-2-oxopentanoate + CO2 + NADH. It functions in the pathway amino-acid biosynthesis; L-leucine biosynthesis; L-leucine from 3-methyl-2-oxobutanoate: step 3/4. Its function is as follows. Catalyzes the oxidation of 3-carboxy-2-hydroxy-4-methylpentanoate (3-isopropylmalate) to 3-carboxy-4-methyl-2-oxopentanoate. The product decarboxylates to 4-methyl-2 oxopentanoate. This Dehalococcoides mccartyi (strain CBDB1) protein is 3-isopropylmalate dehydrogenase.